Here is a 46-residue protein sequence, read N- to C-terminus: Endochitinase 2 (46 aa).

Belongs to the glycosyl hydrolase 19 family. Chitinase class I subfamily.

The enzyme catalyses Random endo-hydrolysis of N-acetyl-beta-D-glucosaminide (1-&gt;4)-beta-linkages in chitin and chitodextrins.. Defense against chitin-containing fungal and bacterial pathogens. The sequence is that of Endochitinase 2 from Arachis hypogaea (Peanut).